A 404-amino-acid polypeptide reads, in one-letter code: MILDVLRTFSTRTRNLPSSGFYSISTSIMRDIKVKSDSKEFLTSSDEEEESVSIRVSSSSSLSSVKSTPEIEKKYVHRVYDAIAPHFSSTRFAKWPKVAAFLESLPSGSVILDAGCGNGKYLGLNPSCFFIGCDISHPLIKICSDKGQEVLVADAVNLPYREEFGDAAISIAVLHHLSTENRRKKAIEELVRVVKPGGFVLITVWAAEQEDTSLLTKWTPLSAKYVEEWVGPGSPMNSPRVRNNPFFSLESIPETEVSTKEQKVENSQFIGLESIPESEESTREQKGESIIPETKASIVEQKDEKSVEESLEALKKSQQEYFVPWHLPYHRAEVSGASASALASGLAKKDDRKGAVVYNRYYHVFSEGELERLASGVGNAMIVDRFFDKSNWCIVLQKEALNQD.

Phosphoserine is present on Ser238.

In terms of assembly, interacts with TRM112A and TRM112B.

The catalysed reaction is 5-(carboxymethyl)uridine(34) in tRNA + S-adenosyl-L-methionine = 5-(2-methoxy-2-oxoethyl)uridine(34) in tRNA + S-adenosyl-L-homocysteine. Its function is as follows. Catalyzes the methylation of 5-carboxymethyl uridine to 5-methylcarboxymethyl uridine at the wobble position of the anticodon loop in tRNA via its methyltransferase domain. Catalyzes the last step in the formation of 5-methylcarboxymethyl uridine at the wobble position of the anticodon loop in target tRNA. In Arabidopsis thaliana (Mouse-ear cress), this protein is tRNA (carboxymethyluridine(34)-5-O)-methyltransferase.